A 431-amino-acid chain; its full sequence is Tol-Pal system protein TolB (431 aa).

The N-terminal stretch at 1 to 26 (MSLMTKLGFRALVASCLITAGSAANA) is a signal peptide. Residues 406–431 (DGSAPPQILSVQGGSVREPSWGPFMQ) are disordered.

It belongs to the TolB family. In terms of assembly, the Tol-Pal system is composed of five core proteins: the inner membrane proteins TolA, TolQ and TolR, the periplasmic protein TolB and the outer membrane protein Pal. They form a network linking the inner and outer membranes and the peptidoglycan layer.

It localises to the periplasm. Its function is as follows. Part of the Tol-Pal system, which plays a role in outer membrane invagination during cell division and is important for maintaining outer membrane integrity. The protein is Tol-Pal system protein TolB of Burkholderia cenocepacia (strain ATCC BAA-245 / DSM 16553 / LMG 16656 / NCTC 13227 / J2315 / CF5610) (Burkholderia cepacia (strain J2315)).